The chain runs to 281 residues: CCAAT/enhancer-binding protein epsilon (281 aa).

The disordered stretch occupies residues 1–30; that stretch reads MSHGTYYECEPRAGQQPLEFSGARAGPGEL. A Glycyl lysine isopeptide (Lys-Gly) (interchain with G-Cter in SUMO2) cross-link involves residue K121. S181 carries the phosphoserine modification. The bZIP domain occupies 204–267; it reads SLEYRLRRER…DTLRNLFRQI (64 aa). The basic motif stretch occupies residues 208 to 228; it reads RLRRERNNIAVRKSRDKAKRR. The leucine-zipper stretch occupies residues 230–237; it reads LETQQKVL.

It belongs to the bZIP family. C/EBP subfamily. Binds DNA as a homodimer and as a heterodimer. Can form stable heterodimers with CEBPA, CEBPB and CEBPD. Interacts with GATA1 and SPI1. Interacts with SMARCD2. In terms of processing, phosphorylated.

The protein localises to the nucleus. In terms of biological role, transcriptional activator. C/EBP are DNA-binding proteins that recognize two different motifs: the CCAAT homology common to many promoters and the enhanced core homology common to many enhancers. Required for the promyelocyte-myelocyte transition in myeloid differentiation. In Ovis aries (Sheep), this protein is CCAAT/enhancer-binding protein epsilon (CEBPE).